The chain runs to 1120 residues: Transcription-repair-coupling factor (1120 aa).

The region spanning 591-756 (DLTNGMLMDR…MTGLKELSII (166 aa)) is the Helicase ATP-binding domain. Residue 604–611 (GDVGFGKT) participates in ATP binding. The DEEQ box motif lies at 709 to 712 (DEEQ). The 157-residue stretch at 777–933 (IIRDALLREH…TIASHDADLR (157 aa)) folds into the Helicase C-terminal domain.

In the N-terminal section; belongs to the UvrB family. It in the C-terminal section; belongs to the helicase family. RecG subfamily.

The protein resides in the cytoplasm. Its function is as follows. Couples transcription and DNA repair by recognizing RNA polymerase (RNAP) stalled at DNA lesions. Mediates ATP-dependent release of RNAP and its truncated transcript from the DNA, and recruitment of nucleotide excision repair machinery to the damaged site. This Rickettsia prowazekii (strain Madrid E) protein is Transcription-repair-coupling factor.